Here is a 298-residue protein sequence, read N- to C-terminus: Protease HtpX homolog (298 aa).

Transmembrane regions (helical) follow at residues 15–35 (LIMV…GYLF) and 39–59 (PWMG…IMWQ). Zn(2+) is bound at residue His-143. Residue Glu-144 is part of the active site. Residue His-147 coordinates Zn(2+). The next 2 membrane-spanning stretches (helical) occupy residues 153–173 (ILLS…SGMA) and 197–217 (MIFK…SASL). A Zn(2+)-binding site is contributed by Glu-227.

Belongs to the peptidase M48B family. Zn(2+) serves as cofactor.

The protein localises to the cell membrane. In Lactobacillus helveticus (strain DPC 4571), this protein is Protease HtpX homolog.